Consider the following 282-residue polypeptide: Tyrosine recombinase XerA (282 aa).

One can recognise a Core-binding (CB) domain in the interval 2-79 (SEPNEVIEEF…ALRAYFRFEG (78 aa)). The region spanning 95–271 (SLPKALTREE…TVEHLRKAQE (177 aa)) is the Tyr recombinase domain. Active-site residues include arginine 132, lysine 157, histidine 223, arginine 226, and histidine 249. The active-site O-(3'-phospho-DNA)-tyrosine intermediate is the tyrosine 258.

Belongs to the 'phage' integrase family. XerA subfamily.

Its subcellular location is the cytoplasm. In terms of biological role, site-specific tyrosine recombinase, which acts by catalyzing the cutting and rejoining of the recombining DNA molecules. This chain is Tyrosine recombinase XerA, found in Thermococcus kodakarensis (strain ATCC BAA-918 / JCM 12380 / KOD1) (Pyrococcus kodakaraensis (strain KOD1)).